The sequence spans 359 residues: Protein RecA (359 aa).

73–80 (GPESSGKT) contributes to the ATP binding site.

It belongs to the RecA family.

Its subcellular location is the cytoplasm. Can catalyze the hydrolysis of ATP in the presence of single-stranded DNA, the ATP-dependent uptake of single-stranded DNA by duplex DNA, and the ATP-dependent hybridization of homologous single-stranded DNAs. It interacts with LexA causing its activation and leading to its autocatalytic cleavage. The protein is Protein RecA of Desulfovibrio desulfuricans (strain ATCC 27774 / DSM 6949 / MB).